The chain runs to 233 residues: Glucosamine-6-phosphate deaminase (233 aa).

Aspartate 62 functions as the Proton acceptor; for enolization step in the catalytic mechanism. Catalysis depends on asparagine 128, which acts as the For ring-opening step. The active-site Proton acceptor; for ring-opening step is histidine 130. Catalysis depends on glutamate 135, which acts as the For ring-opening step.

Belongs to the glucosamine/galactosamine-6-phosphate isomerase family. NagB subfamily.

It carries out the reaction alpha-D-glucosamine 6-phosphate + H2O = beta-D-fructose 6-phosphate + NH4(+). It functions in the pathway amino-sugar metabolism; N-acetylneuraminate degradation; D-fructose 6-phosphate from N-acetylneuraminate: step 5/5. Functionally, catalyzes the reversible isomerization-deamination of glucosamine 6-phosphate (GlcN6P) to form fructose 6-phosphate (Fru6P) and ammonium ion. The chain is Glucosamine-6-phosphate deaminase from Leuconostoc citreum (strain KM20).